The sequence spans 338 residues: Protein FosB (338 aa).

Disordered regions lie at residues 1–54 and 80–162; these read MFQA…PGSF and AQSQ…RVRR. Polar residues predominate over residues 13–31; it reads SRCSSSPSAESQYLSSVDS. At serine 27 the chain carries Phosphoserine. The segment covering 113–124 has biased composition (gly residues); the sequence is SSGGASGSGGPS. Residues 125–137 show a composition bias toward low complexity; sequence TSGTTSGPGPARP. The bZIP domain maps to 155-218; that stretch reads EEKRRVRRER…ERLEFVLVAH (64 aa). The interval 157 to 182 is basic motif; it reads KRRVRRERNKLAAAKCRNRRRELTDR. Residues 183–211 are leucine-zipper; sequence LQAETDQLEEEKAELESEIAELQKEKERL. Disordered stretches follow at residues 222-271 and 315-338; these read CKIP…TSQD and AGTQ…LLAL. Over residues 256-265 the composition is skewed to pro residues; the sequence is LPPPPAPPLP. Residues 318–338 show a composition bias toward polar residues; it reads QRPSGSDQPTDPLNSPSLLAL.

It belongs to the bZIP family. Fos subfamily. As to quaternary structure, heterodimer; binds to DNA as heterodimer. Component of an AP-1 transcription factor complex; composed of FOS-JUN heterodimers. As part of the AP-1 transcription factor complex, forms heterodimers with JUN, JUNB or JUND, thereby binding to the AP-1 consensus sequence and stimulating transcription. Interacts with the BAF multiprotein chromatin-remodeling complex subunits SMARCB1 and SMARCD1. Interacts with ARID1A and JUN. Phosphorylated.

Its subcellular location is the nucleus. In terms of biological role, heterodimerizes with proteins of the JUN family to form an AP-1 transcription factor complex, thereby enhancing their DNA binding activity to an AP-1 consensus sequence 5'-TGA[GC]TCA-3' and enhancing their transcriptional activity. Exhibits transactivation activity in vitro. As part of the AP-1 complex, facilitates enhancer selection together with cell-type-specific transcription factors by collaboratively binding to nucleosomal enhancers and recruiting the SWI/SNF (BAF) chromatin remodeling complex to establish accessible chromatin. Together with JUN, plays a role in activation-induced cell death of T cells by binding to the AP-1 promoter site of FASLG/CD95L, and inducing its transcription in response to activation of the TCR/CD3 signaling pathway. Involved in the display of nurturing behavior towards newborns. May play a role in neurogenesis in the hippocampus and in learning and memory-related tasks by regulating the expression of various genes involved in neurogenesis, depression and epilepsy. Implicated in behavioral responses related to morphine reward and spatial memory. The sequence is that of Protein FosB (FOSB) from Canis lupus familiaris (Dog).